Consider the following 422-residue polypeptide: MECDVINRILNEEDLFDCIKRKSKLTYEVNVGNVIIGGNNPIVVQSMALGGSGDANKDAHEVLELAKAGSELVRVAVNSEQAIKNIPYIRDVLVDNGFDHKMIIGCGQYEIARLVKEYPECASALGKIRINPGNIGFGNKRDKNFEDVIEFAIKYDIPIRIGVNWGSLDKYLASKLMNDNALLSNPKPDYIVLQKALVISAVTSAKRAEEIGLSKNKIVISCKTSKIQDLIPVYTVLSNVCNYPLHLGLTEAGSGIKGVVGSVAGISYLLLNGIGDTIRVSLTQQPGESRTTEVKLCQEILQSIGLKNFNAQVTSCPGCNRTNPKYFHQLVKDVNDYIADRMPVWRNTNPGAKDMVVAVMGCIVNGPGESKHANLGISLPGYGERPVAAVYQDGEKLCTLEGKNIFEQFVSIIENYVSVNYQ.

Residues cysteine 316, cysteine 319, cysteine 362, and glutamate 369 each contribute to the [4Fe-4S] cluster site.

This sequence belongs to the IspG family. It depends on [4Fe-4S] cluster as a cofactor.

The catalysed reaction is (2E)-4-hydroxy-3-methylbut-2-enyl diphosphate + oxidized [flavodoxin] + H2O + 2 H(+) = 2-C-methyl-D-erythritol 2,4-cyclic diphosphate + reduced [flavodoxin]. Its pathway is isoprenoid biosynthesis; isopentenyl diphosphate biosynthesis via DXP pathway; isopentenyl diphosphate from 1-deoxy-D-xylulose 5-phosphate: step 5/6. Converts 2C-methyl-D-erythritol 2,4-cyclodiphosphate (ME-2,4cPP) into 1-hydroxy-2-methyl-2-(E)-butenyl 4-diphosphate. This is 4-hydroxy-3-methylbut-2-en-1-yl diphosphate synthase (flavodoxin) from Ehrlichia canis (strain Jake).